The following is a 175-amino-acid chain: Catabolic 3-dehydroquinase (175 aa).

Catalysis depends on Tyr26, which acts as the Proton acceptor. Asn104, His110, and Asp117 together coordinate substrate. His130 serves as the catalytic Proton donor. Substrate contacts are provided by residues 131–132 (VS) and Arg141.

This sequence belongs to the type-II 3-dehydroquinase family. As to quaternary structure, homododecamer. Adopts a ring-like structure, composed of an arrangement of two hexameric rings stacked on top of one another.

The enzyme catalyses 3-dehydroquinate = 3-dehydroshikimate + H2O. The protein operates within aromatic compound metabolism; 3,4-dihydroxybenzoate biosynthesis; 3,4-dihydroxybenzoate from 3-dehydroquinate: step 1/2. Is involved in the catabolism of quinate. Allows the utilization of quinate as carbon source via the beta-ketoadipate pathway. This chain is Catabolic 3-dehydroquinase, found in Sordaria macrospora (strain ATCC MYA-333 / DSM 997 / K(L3346) / K-hell).